The chain runs to 844 residues: Translation initiation factor IF-2 (844 aa).

Residues 1-11 (MTEDVKADVPK) are compositionally biased toward basic and acidic residues. Disordered stretches follow at residues 1 to 35 (MTED…SKAV) and 79 to 248 (RLEA…KGAA). Residues 21–33 (TTVSGTTTSGKSK) show a composition bias toward low complexity. Positions 79–161 (RLEAEKAATK…AAEEAKRYAE (83 aa)) are enriched in basic and acidic residues. The span at 162-175 (ADDSDNESSSEDYS) shows a compositional bias: acidic residues. Positions 200 to 210 (RGKNKVAKAKK) are enriched in basic residues. Positions 211-237 (GGRDDENSKNSKNERESNRKNQKDAKF) are enriched in basic and acidic residues. The 171-residue stretch at 343-513 (TRAPVVTIMG…LLQSEVLELT (171 aa)) folds into the tr-type G domain. The G1 stretch occupies residues 352-359 (GHVDHGKT). Residue 352–359 (GHVDHGKT) coordinates GTP. The G2 stretch occupies residues 377 to 381 (GITQH). The G3 stretch occupies residues 399-402 (DTPG). GTP contacts are provided by residues 399–403 (DTPGH) and 453–456 (NKID). A G4 region spans residues 453-456 (NKID). A G5 region spans residues 489–491 (SAK).

The protein belongs to the TRAFAC class translation factor GTPase superfamily. Classic translation factor GTPase family. IF-2 subfamily.

The protein localises to the cytoplasm. Functionally, one of the essential components for the initiation of protein synthesis. Protects formylmethionyl-tRNA from spontaneous hydrolysis and promotes its binding to the 30S ribosomal subunits. Also involved in the hydrolysis of GTP during the formation of the 70S ribosomal complex. The polypeptide is Translation initiation factor IF-2 (Haemophilus influenzae (strain PittGG)).